We begin with the raw amino-acid sequence, 1892 residues long: Sodium channel protein type 4 subunit alpha A (1892 aa).

At 1–125 the chain is on the cytoplasmic side; sequence MATILPPPGT…RGAIKILIHS (125 aa). Positions 34 to 54 are disordered; sequence APKAGAHEEEEPPTPNPDLEA. Residues 107 to 433 form an I repeat; sequence ILSPFSLVRR…VVAMAYDEQN (327 aa). Residues 126-144 form a helical membrane-spanning segment; sequence LFSTLIMITILSNCVFMTM. Residues 145-151 lie on the Extracellular side of the membrane; the sequence is SNPPAWS. A helical transmembrane segment spans residues 152 to 172; sequence KTVEYVFTGIYTFEATVKVLS. The Cytoplasmic segment spans residues 173–186; sequence RGFCVGPFTFLRDP. The helical transmembrane segment at 187–204 threads the bilayer; sequence WNWLDFMVISMAYITEFV. Over 205–210 the chain is Extracellular; the sequence is DLGNVS. Asn208 carries N-linked (GlcNAc...) asparagine glycosylation. The helical transmembrane segment at 211–227 threads the bilayer; the sequence is ALRTFRVLRALKTITVI. At 228–246 the chain is on the cytoplasmic side; sequence PGLKTIVAALIQSVKKMVD. The chain crosses the membrane as a helical span at residues 247 to 266; that stretch reads VMILTVFALAVFALVGLQLF. Residues 267–370 are Extracellular-facing; sequence MGNLRHKCIR…PNYGYTSFDS (104 aa). A disulfide bond links Cys274 and Cys339. N-linked (GlcNAc...) asparagine glycosylation is found at Asn281, Asn294, and Asn341. Residues Cys348 and Cys354 are joined by a disulfide bond. The segment at residues 371–395 is an intramembrane region (pore-forming); that stretch reads FGWAFLALFRLMTQDNWESLFQLTL. Over 396 to 402 the chain is Extracellular; it reads RAAGQTY. The chain crosses the membrane as a helical span at residues 403–423; sequence MLFFVVVIFLGSFYLINLILA. Over 424-612 the chain is Cytoplasmic; that stretch reads VVAMAYDEQN…KWVHFVVMDP (189 aa). An II repeat occupies 594–866; the sequence is CCEKWVVFKK…QIAIGRITRG (273 aa). The chain crosses the membrane as a helical span at residues 613 to 631; that stretch reads FVDLAITICIVLNTLFMAM. Residues 632–642 lie on the Extracellular side of the membrane; it reads EHYPMTEEFDY. Residues 643-662 form a helical membrane-spanning segment; sequence MLSVGNLVFTGIFAAEMFFK. At 663–676 the chain is on the cytoplasmic side; the sequence is LIAMDPYYYFQVGW. Residues 677–696 traverse the membrane as a helical segment; sequence NIFDSIIVTLSLVELGLANV. The Extracellular segment spans residues 697–698; it reads QG. A helical transmembrane segment spans residues 699–716; the sequence is LSVLRSFRLLRVFKLAKS. Topologically, residues 717 to 732 are cytoplasmic; the sequence is WPTLNMLIKIIGNSVG. The chain crosses the membrane as a helical span at residues 733 to 751; sequence ALGNLTLVLAIIVFIFAVV. The Extracellular segment spans residues 752–780; it reads GMQLFGKSYKDCVCKISSDCELPRWHMND. Cysteines 765 and 771 form a disulfide. The pore-forming intramembrane region spans 781 to 801; the sequence is FFHSFLIVFRILCGEWIETMW. The Extracellular segment spans residues 802–812; it reads DCMEVAGAGMC. The cysteines at positions 803 and 812 are disulfide-linked. A helical membrane pass occupies residues 813–831; sequence LVVFMMVMVIGNLVVLNLF. The Cytoplasmic portion of the chain corresponds to 832–1071; it reads LALLLSSFSG…TCFTIVEHDW (240 aa). Disordered stretches follow at residues 884–905 and 945–982; these read REPQ…TEGM and LGES…GVED. Over residues 948–971 the composition is skewed to acidic residues; it reads SDSENPSEDDDDQEDDVDSEVTCE. Residues 1052–1366 form an III repeat; the sequence is KGKKWWNLRK…KKYYEAMKKL (315 aa). The chain crosses the membrane as a helical span at residues 1072-1089; that stretch reads FETFIIFMILLSSGALAF. Residues 1090-1102 are Extracellular-facing; that stretch reads EDIYIERRRTVKI. Residues 1103-1121 traverse the membrane as a helical segment; the sequence is VLEFADKVFTFIFVIEMLL. Residues 1122–1135 are Cytoplasmic-facing; it reads KWVAYGFKTYFTNA. A helical transmembrane segment spans residues 1136–1154; the sequence is WCWLDFFIVDISLISLSAN. Topologically, residues 1155–1162 are extracellular; it reads LMGFSDLG. A helical transmembrane segment spans residues 1163 to 1181; the sequence is PIKSLRTLRALRPLRALSR. The Cytoplasmic portion of the chain corresponds to 1182–1198; the sequence is FEGMRVVVNALIGAIPS. A helical membrane pass occupies residues 1199 to 1218; sequence IFNVLLVCLIFWLIFSIMGV. The Extracellular portion of the chain corresponds to 1219-1270; the sequence is NLFAGKFYRCINTTTAELFPISVVNNKSDCVALQEATQEARWVNVKVNYDNV. Cys1228 and Cys1248 are joined by a disulfide. 2 N-linked (GlcNAc...) asparagine glycosylation sites follow: Asn1230 and Asn1244. Residues 1271-1292 constitute an intramembrane region (pore-forming); that stretch reads AKGYLSLLQIATFKGWMDIMYP. Residues 1293–1309 lie on the Extracellular side of the membrane; that stretch reads AVDSREVEEQPSYEINL. A helical transmembrane segment spans residues 1310-1331; it reads YMYIYFVIFIIFGSFFTLNLFI. Residues 1332 to 1394 are Cytoplasmic-facing; it reads GVIIDNFNQQ…LVFDFISQQF (63 aa). Residues 1350-1352 form an important for rapid channel inactivation region; the sequence is IFM. The stretch at 1375–1673 is one IV repeat; the sequence is IPRPANLIQG…WEKFDTGGTQ (299 aa). The chain crosses the membrane as a helical span at residues 1395–1412; the sequence is FDIFIMVLICLNMVTMMV. At 1413–1423 the chain is on the extracellular side; the sequence is ETDDQSPAKED. The helical transmembrane segment at 1424 to 1442 threads the bilayer; that stretch reads FLFKVNVAFIVVFTGECTL. Topologically, residues 1443–1454 are cytoplasmic; the sequence is KLFALRHYFFTN. Residues 1455–1472 traverse the membrane as a helical segment; that stretch reads GWNIFDFIVVILSIAGTM. At 1473-1485 the chain is on the extracellular side; it reads LSDIIEKYFVSPT. A helical membrane pass occupies residues 1486–1502; the sequence is LFRVIRLARIGRILRLI. Residues 1503 to 1521 are Cytoplasmic-facing; it reads KGARGIRTLLFALMMSLPA. The helical transmembrane segment at 1522 to 1539 threads the bilayer; sequence LFNIGLLLFLIMFIFSIF. Residues 1540–1561 are Extracellular-facing; the sequence is GMSNFAYVKKEAGINDMFNFET. The pore-forming intramembrane region spans 1562 to 1584; it reads FGSSIICLFQITTSAGWDTLLLP. Over 1585-1614 the chain is Extracellular; it reads MLNKEPPDCDPAFENPGTDVKGNCGNPMMG. Residues Cys1593 and Cys1608 are joined by a disulfide bond. Residues 1615-1637 form a helical membrane-spanning segment; the sequence is MVFFCSYIIISFLVVVNMYIAII. Residues 1638-1892 lie on the Cytoplasmic side of the membrane; it reads LENFNVAQEE…TQTILRETNV (255 aa). Positions 1767 to 1796 constitute an IQ domain; sequence EDMAAVVIQRAYRNHLHKRGIHHAAYIQRS. Positions 1836–1856 are disordered; it reads RRRPDPQTRCSGARCSPEPPE.

This sequence belongs to the sodium channel (TC 1.A.1.10) family. Nav1.4/SCN4A subfamily. In terms of assembly, voltage-gated sodium (Nav) channels consist of an ion-conducting alpha subunit which is functional on its own associated with regulatory beta subunits.

It is found in the cell membrane. The catalysed reaction is Na(+)(in) = Na(+)(out). In terms of biological role, pore-forming subunit of a voltage-gated sodium (Nav) channel that directly mediates the depolarizing phase of action potentials in excitable membranes. Navs, also called VGSCs (voltage-gated sodium channels) or VDSCs (voltage-dependent sodium channels), operate by switching between closed and open conformations depending on the voltage difference across the membrane. In the open conformation they allow Na(+) ions to selectively pass through the pore, along their electrochemical gradient. The influx of Na+ ions provokes membrane depolarization, initiating the propagation of electrical signals throughout cells and tissues. This Takifugu rubripes (Japanese pufferfish) protein is Sodium channel protein type 4 subunit alpha A (scn4aa).